Here is a 407-residue protein sequence, read N- to C-terminus: S-adenosylmethionine synthase (407 aa).

Residue His-15 coordinates ATP. Asp-17 lines the Mg(2+) pocket. Glu-43 is a K(+) binding site. Glu-56 and Gln-99 together coordinate L-methionine. The flexible loop stretch occupies residues 99–109 (QSPDIARGVDT). The tract at residues 112 to 131 (ERRGGGTAPGGPGDELDRQG) is disordered. ATP-binding positions include 179–181 (DGK), 252–253 (RF), Asp-261, 267–268 (RK), Ala-284, and Lys-288. Asp-261 lines the L-methionine pocket. L-methionine is bound at residue Lys-292.

Belongs to the AdoMet synthase family. Homotetramer; dimer of dimers. The cofactor is Mg(2+). It depends on K(+) as a cofactor.

The protein localises to the cytoplasm. It catalyses the reaction L-methionine + ATP + H2O = S-adenosyl-L-methionine + phosphate + diphosphate. Its pathway is amino-acid biosynthesis; S-adenosyl-L-methionine biosynthesis; S-adenosyl-L-methionine from L-methionine: step 1/1. In terms of biological role, catalyzes the formation of S-adenosylmethionine (AdoMet) from methionine and ATP. The overall synthetic reaction is composed of two sequential steps, AdoMet formation and the subsequent tripolyphosphate hydrolysis which occurs prior to release of AdoMet from the enzyme. The polypeptide is S-adenosylmethionine synthase (Streptomyces fradiae (Streptomyces roseoflavus)).